The sequence spans 224 residues: Thylakoid lumenal 15 kDa protein 1, chloroplastic (224 aa).

Residues 1-34 constitute a chloroplast transit peptide; the sequence is MVILSNVSLFSCCNISQKPSLFSPSSRSSHCPIR. Residues 35–81 constitute a thylakoid transit peptide; sequence CSQSQEGKEVVTSPLRSVVWSLGEEVSKRSLFALVSASLFFVDPALA. Pentapeptide repeat domains are found at residues 116-155 and 156-196; these read SILR…DFSL and ANVT…PLRD.

Its subcellular location is the plastid. It is found in the chloroplast thylakoid lumen. This Arabidopsis thaliana (Mouse-ear cress) protein is Thylakoid lumenal 15 kDa protein 1, chloroplastic.